Reading from the N-terminus, the 437-residue chain is MLWKLTDNIKYEDCEDRHDGTSNGTARLPQLGTVGQSPYTSAPPLSHTPNADFQPPYFPPPYQPIYPQSQDPYSHVNDPYSLNPLHAQPQPQHPGWPGQRQSQESGLLHTHRGLPHQLSGLDPRRDYRRHEDLLHGPHALGSGLGDLPIHSLPHAIEDVPHVEDPGINIPDQTVIKKGPVSLSKSNSNAVSAIPINKDNLFGGVVNPNEVFCSVPGRLSLLSSTSKYKVTVAEVQRRLSPPECLNASLLGGVLRRAKSKNGGRSLREKLDKIGLNLPAGRRKAANVTLLTSLVEGEAVHLARDFGYVCETEFPAKAVAEFLNRQHSDPNEQVARKNMLLATKQICKEFTDLLAQDRSPLGNSRPNPILEPGIQSCLTHFNLISHGFGSPAVCAAVTALQNYLTEALKAMDKMYLSNNPNSHTDNSAKSSDKEEKHRK.

Lys10 is covalently cross-linked (Glycyl lysine isopeptide (Lys-Gly) (interchain with G-Cter in SUMO); alternate). Lys10 participates in a covalent cross-link: Glycyl lysine isopeptide (Lys-Gly) (interchain with G-Cter in SUMO2); alternate. Residues 14–107 (CEDRHDGTSN…GQRQSQESGL (94 aa)) are disordered. Positions 57-62 (YFPPPY) match the PPxY motif motif. 2 stretches are compositionally biased toward low complexity: residues 65–74 (IYPQSQDPYS) and 88–101 (QPQP…GQRQ). Residues Lys177 and Lys184 each participate in a glycyl lysine isopeptide (Lys-Gly) (interchain with G-Cter in SUMO2) cross-link. Ser239 carries the phosphoserine; by PKA modification. The interval 280-410 (RRKAANVTLL…YLTEALKAMD (131 aa)) is H-S-H (helix-span-helix), dimerization. Polar residues predominate over residues 414 to 427 (LSNNPNSHTDNSAK). Residues 414 to 437 (LSNNPNSHTDNSAKSSDKEEKHRK) form a disordered region. Positions 428 to 437 (SSDKEEKHRK) are enriched in basic and acidic residues.

It belongs to the AP-2 family. In terms of assembly, binds DNA as a dimer. Can form homodimers or heterodimers with other AP-2 family members. Interacts with WWOX. Interacts with UBE2I. Interacts with RALBP1 in a complex also containing EPN1 and NUMB during interphase and mitosis. Interacts with CITED4. Interacts with KCTD1; this interaction represses transcription activation. Interacts (via C-terminus) with CITED2 (via C-terminus); the interaction stimulates TFAP2A-transcriptional activation. Interacts (via N-terminus) with EP300 (via N-terminus); the interaction requires CITED2. Interacts with KCTD15; this interaction inhibits TFAP2A transcriptional activation. Post-translationally, sumoylated on Lys-10; which inhibits transcriptional activity.

Its subcellular location is the nucleus. In terms of biological role, sequence-specific DNA-binding protein that interacts with inducible viral and cellular enhancer elements to regulate transcription of selected genes. AP-2 factors bind to the consensus sequence 5'-GCCNNNGGC-3' and activate genes involved in a large spectrum of important biological functions including proper eye, face, body wall, limb and neural tube development. They also suppress a number of genes including MCAM/MUC18, C/EBP alpha and MYC. AP-2-alpha is the only AP-2 protein required for early morphogenesis of the lens vesicle. Together with the CITED2 coactivator, stimulates the PITX2 P1 promoter transcription activation. Associates with chromatin to the PITX2 P1 promoter region. The chain is Transcription factor AP-2-alpha (Tfap2a) from Mus musculus (Mouse).